We begin with the raw amino-acid sequence, 367 residues long: Probable butyrate kinase (367 aa).

It belongs to the acetokinase family.

It localises to the cytoplasm. The enzyme catalyses butanoate + ATP = butanoyl phosphate + ADP. This is Probable butyrate kinase from Bacillus cereus (strain ATCC 14579 / DSM 31 / CCUG 7414 / JCM 2152 / NBRC 15305 / NCIMB 9373 / NCTC 2599 / NRRL B-3711).